Here is a 328-residue protein sequence, read N- to C-terminus: Probable membrane-associated kinase regulator 4 (328 aa).

The tract at residues 213-253 (GQIKTERPKKQSNGSVSGSHRRSFSVSMRRQAAKSSNNKSS) is disordered. Positions 223-240 (QSNGSVSGSHRRSFSVSM) are enriched in polar residues.

It is found in the cell membrane. The sequence is that of Probable membrane-associated kinase regulator 4 (MAKR4) from Arabidopsis thaliana (Mouse-ear cress).